The sequence spans 214 residues: Late embryogenesis abundant protein At1g64065 (214 aa).

Residues 41-61 (VYSLTIIVIIFALCLILSSIF) traverse the membrane as a helical segment.

Belongs to the LEA type 2 family.

The protein localises to the membrane. The chain is Late embryogenesis abundant protein At1g64065 from Arabidopsis thaliana (Mouse-ear cress).